Reading from the N-terminus, the 208-residue chain is Small ribosomal subunit protein uS4 (208 aa).

One can recognise an S4 RNA-binding domain in the interval 98-160 (RRLDNVVYRM…SKNNVQIQRA (63 aa)).

Belongs to the universal ribosomal protein uS4 family. In terms of assembly, part of the 30S ribosomal subunit. Contacts protein S5. The interaction surface between S4 and S5 is involved in control of translational fidelity.

Its function is as follows. One of the primary rRNA binding proteins, it binds directly to 16S rRNA where it nucleates assembly of the body of the 30S subunit. In terms of biological role, with S5 and S12 plays an important role in translational accuracy. This chain is Small ribosomal subunit protein uS4, found in Nautilia profundicola (strain ATCC BAA-1463 / DSM 18972 / AmH).